Reading from the N-terminus, the 215-residue chain is UPF0502 protein YceH (215 aa).

Lysine 80 is modified (N6-acetyllysine).

This sequence belongs to the UPF0502 family.

This chain is UPF0502 protein YceH, found in Escherichia coli O7:K1 (strain IAI39 / ExPEC).